The sequence spans 481 residues: Ribosomal RNA small subunit methyltransferase F (481 aa).

S-adenosyl-L-methionine-binding positions include 119–125 (ASAPGSK), Glu143, Asp170, and Asp188. Cys241 (nucleophile) is an active-site residue.

The protein belongs to the class I-like SAM-binding methyltransferase superfamily. RsmB/NOP family.

The protein localises to the cytoplasm. It catalyses the reaction cytidine(1407) in 16S rRNA + S-adenosyl-L-methionine = 5-methylcytidine(1407) in 16S rRNA + S-adenosyl-L-homocysteine + H(+). In terms of biological role, specifically methylates the cytosine at position 1407 (m5C1407) of 16S rRNA. In Shewanella sp. (strain MR-4), this protein is Ribosomal RNA small subunit methyltransferase F.